Reading from the N-terminus, the 1543-residue chain is ATP-binding cassette sub-family A member 10 (1543 aa).

7 helical membrane-spanning segments follow: residues 83-103, 135-155, 185-205, 210-230, 240-260, 264-284, and 310-330; these read YWLK…IEVT, WFHF…SLNV, ICFI…IPIV, FMVI…LAFL, LAGL…FTVL, LPLS…TAGM, and IATF…TLYF. One can recognise an ABC transporter 1 domain in the interval 391–626; it reads IRIRNVIKEY…WGIGYHLSLH (236 aa). 427 to 434 is a binding site for ATP; the sequence is GHNGAGKS. The next 8 membrane-spanning stretches (helical) occupy residues 774 to 794, 890 to 910, 926 to 946, 985 to 1005, 1014 to 1034, 1046 to 1066, 1073 to 1093, and 1113 to 1133; these read LLCL…EKIM, LNCF…IFNF, IVLD…TNCV, IPLY…IFLG, FVLV…TYVL, GFWS…MVST, LILC…MLLI, and KTIL…LFVI. The segment covering 1153–1164 has biased composition (basic and acidic residues); the sequence is ISPRSRETHPNP. Residues 1153–1177 form a disordered region; the sequence is ISPRSRETHPNPEEPEEEDEDVQAE. Residues 1165 to 1174 show a composition bias toward acidic residues; the sequence is EEPEEEDEDV. The 235-residue stretch at 1206–1440 folds into the ABC transporter 2 domain; it reads YETKKSCFST…FGRDYLLEIK (235 aa). An ATP-binding site is contributed by 1239–1246; sequence GHNGAGKS.

It belongs to the ABC transporter superfamily. ABCA family. As to expression, widely expressed. Highly expressed in skeletal muscle, heart, brain and gastrointestinal tract.

Its subcellular location is the membrane. Probable transporter which may play a role in macrophage lipid transport and homeostasis. In Homo sapiens (Human), this protein is ATP-binding cassette sub-family A member 10 (ABCA10).